Reading from the N-terminus, the 136-residue chain is Putative LysR family substrate binding domain-containing protein YagP (136 aa).

This sequence belongs to the LysR transcriptional regulatory family.

This is Putative LysR family substrate binding domain-containing protein YagP (yagP) from Escherichia coli (strain K12).